The primary structure comprises 158 residues: Ribonuclease H (158 aa).

Positions 3 to 144 (ELKLIHIFTD…CDQLARAAAE (142 aa)) constitute an RNase H type-1 domain. 4 residues coordinate Mg(2+): D12, E50, D72, and D136.

The protein belongs to the RNase H family. As to quaternary structure, monomer. Mg(2+) is required as a cofactor.

The protein resides in the cytoplasm. It catalyses the reaction Endonucleolytic cleavage to 5'-phosphomonoester.. Functionally, endonuclease that specifically degrades the RNA of RNA-DNA hybrids. This Shewanella sp. (strain MR-7) protein is Ribonuclease H.